The sequence spans 647 residues: Glutamyl-tRNA(Gln) amidotransferase subunit B, mitochondrial (647 aa).

The transit peptide at 1-16 (MARNLCRNVQTTPRPL) directs the protein to the mitochondrion. The disordered stretch occupies residues 39–77 (PRPRYFGSSTAKSAKKKSNNKAYSGSSMSAGDASAGPSR). Low complexity predominate over residues 58 to 76 (NKAYSGSSMSAGDASAGPS).

This sequence belongs to the GatB/GatE family. GatB subfamily. In terms of assembly, subunit of the heterotrimeric GatCAB amidotransferase (AdT) complex, composed of A, B and C subunits.

It is found in the mitochondrion. The enzyme catalyses L-glutamyl-tRNA(Gln) + L-glutamine + ATP + H2O = L-glutaminyl-tRNA(Gln) + L-glutamate + ADP + phosphate + H(+). Its function is as follows. Allows the formation of correctly charged Gln-tRNA(Gln) through the transamidation of misacylated Glu-tRNA(Gln) in the mitochondria. The reaction takes place in the presence of glutamine and ATP through an activated gamma-phospho-Glu-tRNA(Gln). The chain is Glutamyl-tRNA(Gln) amidotransferase subunit B, mitochondrial from Mycosarcoma maydis (Corn smut fungus).